The primary structure comprises 707 residues: Ribosomal RNA large subunit methyltransferase K/L (707 aa).

One can recognise a THUMP domain in the interval 44-155 (VIYNLCLWSR…NDILTVSFDL (112 aa)).

The protein belongs to the methyltransferase superfamily. RlmKL family.

The protein localises to the cytoplasm. It catalyses the reaction guanosine(2445) in 23S rRNA + S-adenosyl-L-methionine = N(2)-methylguanosine(2445) in 23S rRNA + S-adenosyl-L-homocysteine + H(+). It carries out the reaction guanosine(2069) in 23S rRNA + S-adenosyl-L-methionine = N(2)-methylguanosine(2069) in 23S rRNA + S-adenosyl-L-homocysteine + H(+). Functionally, specifically methylates the guanine in position 2445 (m2G2445) and the guanine in position 2069 (m7G2069) of 23S rRNA. The sequence is that of Ribosomal RNA large subunit methyltransferase K/L from Legionella pneumophila (strain Corby).